Reading from the N-terminus, the 57-residue chain is MENSKVMKDIEVANLLEEVQEDELNEVLGAKKKSGVIPTVSHDCHMNSFQFVFTCCS.

Residues 1–30 constitute a propeptide that is removed on maturation; that stretch reads MENSKVMKDIEVANLLEEVQEDELNEVLGA. A cross-link (beta-methyllanthionine (Thr-Cys)) is located at residues 39 to 44; it reads TVSHDC. 2 cross-links (lanthionine (Ser-Cys)) span residues 41 to 55 and 48 to 56; these read SHDC…VFTC and SFQFVFTCC. 2,3-didehydrobutyrine is present on Thr54.

Maturation of lantibiotics involves the enzymatic conversion of Thr, and Ser into dehydrated AA and the formation of thioether bonds with cysteine. This is followed by membrane translocation and cleavage of the modified precursor.

The protein localises to the secreted. In terms of biological role, lanthionine-containing peptide antibiotic (lantibiotic) active on Gram-positive bacteria. The bactericidal activity of lantibiotics is based on depolarization of energized bacterial cytoplasmic membranes, initiated by the formation of aqueous transmembrane pores. The chain is Lantibiotic nukacin from Staphylococcus simulans.